The chain runs to 116 residues: Aspartate 1-decarboxylase (116 aa).

Catalysis depends on Ser-25, which acts as the Schiff-base intermediate with substrate; via pyruvic acid. At Ser-25 the chain carries Pyruvic acid (Ser). Thr-57 contacts substrate. The active-site Proton donor is the Tyr-58. 73–75 (GAA) is a binding site for substrate.

This sequence belongs to the PanD family. In terms of assembly, heterooctamer of four alpha and four beta subunits. Requires pyruvate as cofactor. In terms of processing, is synthesized initially as an inactive proenzyme, which is activated by self-cleavage at a specific serine bond to produce a beta-subunit with a hydroxyl group at its C-terminus and an alpha-subunit with a pyruvoyl group at its N-terminus.

The protein localises to the cytoplasm. It carries out the reaction L-aspartate + H(+) = beta-alanine + CO2. It participates in cofactor biosynthesis; (R)-pantothenate biosynthesis; beta-alanine from L-aspartate: step 1/1. Functionally, catalyzes the pyruvoyl-dependent decarboxylation of aspartate to produce beta-alanine. This Parabacteroides distasonis (strain ATCC 8503 / DSM 20701 / CIP 104284 / JCM 5825 / NCTC 11152) protein is Aspartate 1-decarboxylase.